Reading from the N-terminus, the 210-residue chain is Probable HTH-type transcriptional regulator ArpR (210 aa).

Positions 10 to 70 constitute an HTH tetR-type domain; sequence QETRAQIIEA…ALLDSLHETH (61 aa). Residues 33–52 constitute a DNA-binding region (H-T-H motif); it reads TLADIAELAGVTRGAIYWHF.

Its function is as follows. Probable regulatory protein for the antibiotic efflux pump arpABC operon. May function as a repressor. This is Probable HTH-type transcriptional regulator ArpR (arpR) from Pseudomonas putida (Arthrobacter siderocapsulatus).